We begin with the raw amino-acid sequence, 217 residues long: Thiopurine S-methyltransferase (217 aa).

S-adenosyl-L-methionine-binding residues include Trp11, Leu46, Glu67, and Arg122.

The protein belongs to the class I-like SAM-binding methyltransferase superfamily. TPMT family.

It localises to the cytoplasm. The catalysed reaction is S-adenosyl-L-methionine + a thiopurine = S-adenosyl-L-homocysteine + a thiopurine S-methylether.. The protein is Thiopurine S-methyltransferase of Vibrio atlanticus (strain LGP32) (Vibrio splendidus (strain Mel32)).